We begin with the raw amino-acid sequence, 271 residues long: Meiotic drive suppressor wtf35 (271 aa).

Disordered stretches follow at residues 1–24 (MKNNYTSLKSPLDEEDELKTDHEI) and 54–75 (TVPEDSSTGPTETANPNVERRQ). The segment covering 57–69 (EDSSTGPTETANP) has biased composition (polar residues). 4 consecutive transmembrane segments (helical) span residues 90-110 (LLISVLAVSVVFFTAWVCVNP), 120-140 (AFSVTIGITCPILFIAIFCFF), 176-196 (WENMPMAFSEVFLFNILVGSP), and 213-233 (SLAEHITFVVLSILVFIAETV).

The protein belongs to the WTF family. In terms of assembly, homomer. Interacts with other proteins that exhibit high sequence similarity.

The protein resides in the spore membrane. It is found in the vacuole membrane. Its function is as follows. Acts as a suppressor component of the dual wtf meiotic drive system, and can suppress but not confer meiotic drive by compatible poisons. Wtf meiotic drive systems promote unequal transmission of alleles from the parental zygote to progeny spores by encoding a poison and an antidote from the same locus; the poison is trans-acting and forms toxic aggregates in all spores within an ascus, wherease the antidote is spore-specific and targets aggregates for degradation by the vacuole. Meiotic drive by wtf systems therefore lead to poisoning of all progeny that do not inherit the dual poison/antidote allele, or express a compatible antidote. The protein is Meiotic drive suppressor wtf35 of Schizosaccharomyces kambucha (Fission yeast).